The following is a 210-amino-acid chain: Thymidylate kinase (210 aa).

9-16 (GLEGAGKS) is an ATP binding site.

Belongs to the thymidylate kinase family.

It catalyses the reaction dTMP + ATP = dTDP + ADP. Its function is as follows. Phosphorylation of dTMP to form dTDP in both de novo and salvage pathways of dTTP synthesis. This is Thymidylate kinase from Aliivibrio fischeri (strain MJ11) (Vibrio fischeri).